Consider the following 167-residue polypeptide: Small ribosomal subunit protein uS5 (167 aa).

The S5 DRBM domain maps to 12-75 (LQEKLVQVNR…DAARKNMITV (64 aa)).

The protein belongs to the universal ribosomal protein uS5 family. In terms of assembly, part of the 30S ribosomal subunit. Contacts proteins S4 and S8.

With S4 and S12 plays an important role in translational accuracy. Its function is as follows. Located at the back of the 30S subunit body where it stabilizes the conformation of the head with respect to the body. The sequence is that of Small ribosomal subunit protein uS5 from Hahella chejuensis (strain KCTC 2396).